A 268-amino-acid polypeptide reads, in one-letter code: Orotidine 5'-phosphate decarboxylase (268 aa).

Substrate-binding positions include Asp39, 61-63, 93-102, Tyr219, and Arg237; these read KTH and DRKFADIGNT. Lys95 acts as the Proton donor in catalysis.

It belongs to the OMP decarboxylase family.

The enzyme catalyses orotidine 5'-phosphate + H(+) = UMP + CO2. It functions in the pathway pyrimidine metabolism; UMP biosynthesis via de novo pathway; UMP from orotate: step 2/2. The chain is Orotidine 5'-phosphate decarboxylase (URA3) from Pachysolen tannophilus (Yeast).